The following is a 291-amino-acid chain: HTH-type transcriptional regulator DgcR (291 aa).

In terms of domain architecture, HTH lysR-type spans 1–58; that stretch reads MRLRHIEVFHAIYTTGSITNAAKALHVSQPSVSKVLSHAEMQLGFKLFERVKGRLIPT. Positions 18–37 form a DNA-binding region, H-T-H motif; it reads ITNAAKALHVSQPSVSKVLS.

Belongs to the LysR transcriptional regulatory family.

Transcriptional regulator that positively regulates the expression of the D-Glu gene cluster (DGC). The cluster includes dgcN and dgcA, which are involved in a deamination-independent D-glutamate degradation pathway, dgcR itself, dgcT, dgcP and dgcH. Acts by binding the consensus sequence upstream of dgcR, dgcT, dgcP and dgcH. The chain is HTH-type transcriptional regulator DgcR from Pseudoalteromonas sp.